We begin with the raw amino-acid sequence, 142 residues long: Large ribosomal subunit protein uL13 (142 aa).

The protein belongs to the universal ribosomal protein uL13 family. As to quaternary structure, part of the 50S ribosomal subunit.

In terms of biological role, this protein is one of the early assembly proteins of the 50S ribosomal subunit, although it is not seen to bind rRNA by itself. It is important during the early stages of 50S assembly. This is Large ribosomal subunit protein uL13 from Vibrio parahaemolyticus serotype O3:K6 (strain RIMD 2210633).